The primary structure comprises 820 residues: Serine/threonine-protein phosphatase 4 regulatory subunit 3-B (820 aa).

The 100-residue stretch at 1-100 (MSDTRRRVKV…DEIWEKICQV (100 aa)) folds into the WH1 domain. Residues 682 to 694 (ELWFNEDDEEEGE) are compositionally biased toward acidic residues. Disordered regions lie at residues 682-711 (ELWF…DFPE) and 750-820 (AANG…RLGS). Residues 701 to 711 (EKTKPEDDFPE) show a composition bias toward basic and acidic residues. Polar residues-rich tracts occupy residues 750–761 (AANGANSTNSKS) and 768–790 (PATS…STKG). Residues 798–809 (YPDDEDEEEEED) are compositionally biased toward acidic residues.

Belongs to the SMEK family. In terms of assembly, serine/threonine-protein phosphatase 4 (PP4) occurs in different assemblies of the catalytic and one or more regulatory subunits.

Its function is as follows. Regulatory subunit of serine/threonine-protein phosphatase 4 (PP4). The chain is Serine/threonine-protein phosphatase 4 regulatory subunit 3-B from Xenopus laevis (African clawed frog).